Consider the following 191-residue polypeptide: Phospholipase A2-delta (191 aa).

An N-terminal signal peptide occupies residues 1 to 25; that stretch reads MIRGGALTHVALGLTVFLLLAVVHS. Cystine bridges form between Cys29–Cys56, Cys33–Cys62, Cys38–Cys115, Cys49–Cys69, Cys68–Cys93, and Cys75–Cys86. Ca(2+) contacts are provided by Tyr48, Gly50, and Tyr53. His72 is a catalytic residue. Ca(2+) is bound at residue Asp73. The disordered stretch occupies residues 161-191; that stretch reads KADTKDGLGTNQGPQTKDGSKVSVPMNPSPS.

The protein belongs to the phospholipase A2 family. Requires Ca(2+) as cofactor. Specifically expressed in flowers but at a low level. Detected specifically in the pollen.

It is found in the secreted. The protein resides in the endoplasmic reticulum. It catalyses the reaction a 1,2-diacyl-sn-glycero-3-phosphocholine + H2O = a 1-acyl-sn-glycero-3-phosphocholine + a fatty acid + H(+). PA2 catalyzes the calcium-dependent hydrolysis of the 2-acyl groups in 3-sn-phosphoglycerides. Releases lysophospholipids (LPLs) and free fatty acids (FFAs) from membrane phospholipids in response to hormones and other external stimuli. Plays a role in pollen development and germination and tube growth. The protein is Phospholipase A2-delta (PLA2-DELTA) of Arabidopsis thaliana (Mouse-ear cress).